Here is a 381-residue protein sequence, read N- to C-terminus: Arginine biosynthesis bifunctional protein ArgJ (381 aa).

Threonine 143, lysine 165, threonine 176, glutamate 255, asparagine 376, and threonine 381 together coordinate substrate. The active-site Nucleophile is the threonine 176.

This sequence belongs to the ArgJ family. As to quaternary structure, heterotetramer of two alpha and two beta chains.

The protein localises to the cytoplasm. The catalysed reaction is N(2)-acetyl-L-ornithine + L-glutamate = N-acetyl-L-glutamate + L-ornithine. The enzyme catalyses L-glutamate + acetyl-CoA = N-acetyl-L-glutamate + CoA + H(+). The protein operates within amino-acid biosynthesis; L-arginine biosynthesis; L-ornithine and N-acetyl-L-glutamate from L-glutamate and N(2)-acetyl-L-ornithine (cyclic): step 1/1. It participates in amino-acid biosynthesis; L-arginine biosynthesis; N(2)-acetyl-L-ornithine from L-glutamate: step 1/4. Its function is as follows. Catalyzes two activities which are involved in the cyclic version of arginine biosynthesis: the synthesis of N-acetylglutamate from glutamate and acetyl-CoA as the acetyl donor, and of ornithine by transacetylation between N(2)-acetylornithine and glutamate. The protein is Arginine biosynthesis bifunctional protein ArgJ of Thermus thermophilus (strain ATCC BAA-163 / DSM 7039 / HB27).